The primary structure comprises 40 residues: Large ribosomal subunit protein bL36B (40 aa).

This sequence belongs to the bacterial ribosomal protein bL36 family.

This is Large ribosomal subunit protein bL36B from Streptomyces coelicolor (strain ATCC BAA-471 / A3(2) / M145).